We begin with the raw amino-acid sequence, 456 residues long: Signal transduction histidine-protein kinase ArlS (456 aa).

The next 2 membrane-spanning stretches (helical) occupy residues 13–33 (LITT…IIFF) and 157–177 (IVAL…SYIF). Positions 179–232 (SQITKPIVTMSNKMNQIRRDGFQNKLELTTNYEETDNLIDTFNEMMYQIEESFN) constitute an HAMP domain. The 217-residue stretch at 240–456 (DASHELRTPL…TFKISFPVLN (217 aa)) folds into the Histidine kinase domain. Residue His243 is modified to Phosphohistidine; by autocatalysis.

In terms of processing, autophosphorylated.

The protein resides in the cell membrane. The catalysed reaction is ATP + protein L-histidine = ADP + protein N-phospho-L-histidine.. Member of the two-component regulatory system ArlS/ArlR. ArlS probably functions as a sensor protein kinase which is autophosphorylated at a histidine residue and transfers its phosphate group to ArlR. The protein is Signal transduction histidine-protein kinase ArlS (arlS) of Staphylococcus epidermidis (strain ATCC 35984 / DSM 28319 / BCRC 17069 / CCUG 31568 / BM 3577 / RP62A).